The sequence spans 416 residues: Protein sine oculis (416 aa).

Disordered stretches follow at residues 32–91 (TGLS…SGGG) and 262–329 (VSNW…NNGL). Over residues 42–57 (NNNNNNSSTSNNNNST) the composition is skewed to low complexity. Over residues 79–91 (NGGGGGGVVSGGG) the composition is skewed to gly residues. A DNA-binding region (homeobox) is located at residues 218–277 (GEETSYCFKEKSRSVLRDWYSHNPYPSPREKRDLAEATGLTTTQVSNWFKNRRQRDRAAE). The segment covering 273–290 (DRAAEHKDGSTDKQHLDS) has biased composition (basic and acidic residues). A compositionally biased stretch (low complexity) spans 291 to 329 (SSDSEMEGSMLPSQSAQHQQQQQQQQHSPGNSSGNNNGL).

It belongs to the SIX/Sine oculis homeobox family. In terms of tissue distribution, in developing embryos, expressed in the eye disk epithelium, bolwig's organ and the optic lobe primordium at areas of invagination. In adults, present in photoreceptor cells in the apical regions of the retina, and in optic lobes.

It is found in the nucleus. Functionally, required for visual system development. May transcriptionally regulate genes necessary for optic lobe invagination and Bolwig's nerve formation. The chain is Protein sine oculis (so) from Drosophila melanogaster (Fruit fly).